Here is a 205-residue protein sequence, read N- to C-terminus: Large ribosomal subunit protein uL3 (205 aa).

It belongs to the universal ribosomal protein uL3 family. As to quaternary structure, part of the 50S ribosomal subunit. Forms a cluster with proteins L14 and L19.

One of the primary rRNA binding proteins, it binds directly near the 3'-end of the 23S rRNA, where it nucleates assembly of the 50S subunit. The sequence is that of Large ribosomal subunit protein uL3 from Thermosipho africanus (strain TCF52B).